A 273-amino-acid chain; its full sequence is MADMHEWVIAFILGGVEGLTEFLPVSSTGHMILVGSLLGFTDDKAKTFEVIIQLGSILAVVVVFWRRLFGLIGIHFGQVPHEGIGSGRLRLGHILLGMIPAVVLGLVFHEQIKAIFAPIYVMYALVVGGVLLLAGEWLKPKVPRAAGIDDLTYLQAFLIGCFQCLALWPGFSRSGATISGGLLVGVSRYAASEFSFILAVPMMLGATVLDLYKSLPFLSWQDLPMFAIGFVTAFVVALLAIKFFLQIIKRISFVPFAIYRFILAVVVYWILIG.

8 helical membrane-spanning segments follow: residues 18-40 (GLTEFLPVSSTGHMILVGSLLGF), 45-65 (AKTFEVIIQLGSILAVVVVFW), 92-112 (GHILLGMIPAVVLGLVFHEQI), 114-134 (AIFAPIYVMYALVVGGVLLLA), 151-171 (LTYLQAFLIGCFQCLALWPGF), 189-209 (YAASEFSFILAVPMMLGATVL), 225-245 (MFAIGFVTAFVVALLAIKFFL), and 253-273 (FVPFAIYRFILAVVVYWILIG).

The protein belongs to the UppP family.

Its subcellular location is the cell inner membrane. It catalyses the reaction di-trans,octa-cis-undecaprenyl diphosphate + H2O = di-trans,octa-cis-undecaprenyl phosphate + phosphate + H(+). Catalyzes the dephosphorylation of undecaprenyl diphosphate (UPP). Confers resistance to bacitracin. This Sodalis glossinidius (strain morsitans) protein is Undecaprenyl-diphosphatase.